Consider the following 438-residue polypeptide: UDP-N-acetylmuramoylalanine--D-glutamate ligase (438 aa).

112 to 118 (GSNGKST) serves as a coordination point for ATP.

The protein belongs to the MurCDEF family.

Its subcellular location is the cytoplasm. The catalysed reaction is UDP-N-acetyl-alpha-D-muramoyl-L-alanine + D-glutamate + ATP = UDP-N-acetyl-alpha-D-muramoyl-L-alanyl-D-glutamate + ADP + phosphate + H(+). Its pathway is cell wall biogenesis; peptidoglycan biosynthesis. In terms of biological role, cell wall formation. Catalyzes the addition of glutamate to the nucleotide precursor UDP-N-acetylmuramoyl-L-alanine (UMA). The chain is UDP-N-acetylmuramoylalanine--D-glutamate ligase from Sodalis glossinidius (strain morsitans).